The primary structure comprises 112 residues: Secretoglobin family 2B member 20 (112 aa).

Residues 1-23 form the signal peptide; the sequence is MKGTLLLLGLLVTGELSFQTTEA. Asparagine 50 carries N-linked (GlcNAc...) asparagine glycosylation.

Belongs to the secretoglobin family. Expressed in lacrimal gland, at higher level in males than females. Expressed in the submandibular gland.

Its subcellular location is the secreted. This chain is Secretoglobin family 2B member 20 (Scgb2b20), found in Mus musculus (Mouse).